A 95-amino-acid chain; its full sequence is Aspartyl/glutamyl-tRNA(Asn/Gln) amidotransferase subunit C (95 aa).

Belongs to the GatC family. As to quaternary structure, heterotrimer of A, B and C subunits.

It carries out the reaction L-glutamyl-tRNA(Gln) + L-glutamine + ATP + H2O = L-glutaminyl-tRNA(Gln) + L-glutamate + ADP + phosphate + H(+). The catalysed reaction is L-aspartyl-tRNA(Asn) + L-glutamine + ATP + H2O = L-asparaginyl-tRNA(Asn) + L-glutamate + ADP + phosphate + 2 H(+). Allows the formation of correctly charged Asn-tRNA(Asn) or Gln-tRNA(Gln) through the transamidation of misacylated Asp-tRNA(Asn) or Glu-tRNA(Gln) in organisms which lack either or both of asparaginyl-tRNA or glutaminyl-tRNA synthetases. The reaction takes place in the presence of glutamine and ATP through an activated phospho-Asp-tRNA(Asn) or phospho-Glu-tRNA(Gln). The chain is Aspartyl/glutamyl-tRNA(Asn/Gln) amidotransferase subunit C from Acidithiobacillus ferrooxidans (strain ATCC 23270 / DSM 14882 / CIP 104768 / NCIMB 8455) (Ferrobacillus ferrooxidans (strain ATCC 23270)).